The sequence spans 209 residues: Adenylate kinase (209 aa).

59-64 (GSGKRT) lines the ATP pocket. An NMP region spans residues 79–108 (SSGQVLTRGVESGSETSQLAHSYVSRGERV). Residues Ser-80, 106–108 (ERV), 135–138 (GYPR), and Gln-142 each bind AMP. Residues 172 to 205 (HRRYDPATNKXYHMLDNPPPGGRCRVMRTAPAEG) form an LID region. Residue Arg-173 participates in ATP binding.

Belongs to the adenylate kinase family. As to quaternary structure, monomer.

It is found in the cytoplasm. The catalysed reaction is AMP + ATP = 2 ADP. Catalyzes the reversible transfer of the terminal phosphate group between ATP and AMP. Plays an important role in cellular energy homeostasis and in adenine nucleotide metabolism. This Trypanosoma brucei rhodesiense protein is Adenylate kinase.